We begin with the raw amino-acid sequence, 406 residues long: MSQPITRENFDEWMIPVYAPAPFIPVRGEGSRLWDQQGKEYIDFAGGIAVNALGHAHPELREALNEQASKFWHTGNGYTNEPVLRLAKKLIDATFADRVFFCNSGAEANEAALKLARKFAHDRYGSHKSGIVAFKNAFHGRTLFTVSAGGQPAYSQDFAPLPADIRHAAYNDINSASALIDDSTCAVIVEPIQGEGGVVPASNAFLQGLRELCNRHNALLIFDEVQTGVGRTGELYAYMHYGVTPDLLTTAKALGGGFPVGALLATEECARVMTVGTHGTTYGGNPLASAVAGKVLELINTPEMLNGVKQRHDWFVERLNTINHRYGLFSEVRGLGLLIGCVLNADYAGQAKQISQEAAKAGVMVLIAGGNVVRFAPALNVSEEEVTTGLDRFAAACEHFVSRGSS.

At Lys252 the chain carries N6-(pyridoxal phosphate)lysine.

This sequence belongs to the class-III pyridoxal-phosphate-dependent aminotransferase family. AstC subfamily. It depends on pyridoxal 5'-phosphate as a cofactor.

It catalyses the reaction N(2)-succinyl-L-ornithine + 2-oxoglutarate = N-succinyl-L-glutamate 5-semialdehyde + L-glutamate. It participates in amino-acid degradation; L-arginine degradation via AST pathway; L-glutamate and succinate from L-arginine: step 3/5. Its function is as follows. Catalyzes the transamination of N(2)-succinylornithine and alpha-ketoglutarate into N(2)-succinylglutamate semialdehyde and glutamate. Can also act as an acetylornithine aminotransferase. The polypeptide is Succinylornithine transaminase (Escherichia coli O139:H28 (strain E24377A / ETEC)).